The chain runs to 395 residues: Acetylornithine aminotransferase (395 aa).

Pyridoxal 5'-phosphate-binding positions include 117 to 118 (GA) and phenylalanine 144. Position 147 (arginine 147) interacts with N(2)-acetyl-L-ornithine. Residue 230-233 (DEVQ) coordinates pyridoxal 5'-phosphate. The residue at position 259 (lysine 259) is an N6-(pyridoxal phosphate)lysine. Position 285 (serine 285) interacts with N(2)-acetyl-L-ornithine. Threonine 286 provides a ligand contact to pyridoxal 5'-phosphate.

This sequence belongs to the class-III pyridoxal-phosphate-dependent aminotransferase family. ArgD subfamily. In terms of assembly, homodimer. It depends on pyridoxal 5'-phosphate as a cofactor.

Its subcellular location is the cytoplasm. It catalyses the reaction N(2)-acetyl-L-ornithine + 2-oxoglutarate = N-acetyl-L-glutamate 5-semialdehyde + L-glutamate. The protein operates within amino-acid biosynthesis; L-arginine biosynthesis; N(2)-acetyl-L-ornithine from L-glutamate: step 4/4. This Methanosarcina acetivorans (strain ATCC 35395 / DSM 2834 / JCM 12185 / C2A) protein is Acetylornithine aminotransferase.